Reading from the N-terminus, the 285-residue chain is Protein HEXIM1 (285 aa).

Disordered stretches follow at residues 1–56 (MSEV…QNPG) and 132–196 (LMED…LQKD). Residues 23–36 (GGWHHPVEREEHPV) are compositionally biased toward basic and acidic residues. Over residues 168 to 180 (TDDDLEEEEDEAG) the composition is skewed to acidic residues. The stretch at 213–284 (SKQDLIKEYL…QEGKQVAADS (72 aa)) forms a coiled coil.

The protein belongs to the HEXIM family. As to quaternary structure, homooligomer and heterooligomer. Core component of the 7SK RNP complex.

The protein resides in the nucleus. The protein localises to the cytoplasm. Its function is as follows. Transcriptional regulator which functions as a general RNA polymerase II transcription inhibitor. Core component of the 7SK RNP complex: in cooperation with 7SK snRNA sequesters P-TEFb in a large inactive 7SK snRNP complex preventing RNA polymerase II phosphorylation and subsequent transcriptional elongation. Plays a role in the regulation of DNA virus-mediated innate immune response by assembling into the HDP-RNP complex, a complex that serves as a platform for IRF3 phosphorylation and subsequent innate immune response activation through the cGAS-STING pathway. The sequence is that of Protein HEXIM1 (hexim1) from Xenopus laevis (African clawed frog).